We begin with the raw amino-acid sequence, 234 residues long: Orotidine 5'-phosphate decarboxylase (234 aa).

Residues aspartate 11, lysine 33, 60 to 69 (DLKFHDIPNT), threonine 120, arginine 181, glutamine 190, glycine 210, and arginine 211 each bind substrate. Residue lysine 62 is the Proton donor of the active site.

It belongs to the OMP decarboxylase family. Type 1 subfamily. In terms of assembly, homodimer.

It carries out the reaction orotidine 5'-phosphate + H(+) = UMP + CO2. The protein operates within pyrimidine metabolism; UMP biosynthesis via de novo pathway; UMP from orotate: step 2/2. Catalyzes the decarboxylation of orotidine 5'-monophosphate (OMP) to uridine 5'-monophosphate (UMP). The polypeptide is Orotidine 5'-phosphate decarboxylase (Aliivibrio fischeri (strain ATCC 700601 / ES114) (Vibrio fischeri)).